We begin with the raw amino-acid sequence, 679 residues long: Shutoff protein (679 aa).

The interval 178–232 is binding to host EIF4G; sequence LFDYLIGESQDPNDLDSEYKLAFTDEDLPQEGQAEKTKQRETLGAVATFGAVLLS. Residues 235 to 353 enclose the RRM domain; it reads RLFTHPVVIK…ELAGANYAEA (119 aa). Phosphotyrosine; by host is present on residues Tyr252 and Tyr564. The disordered stretch occupies residues 552–679; sequence REKSILKRGG…SLQGTRRESS (128 aa). Over residues 661 to 679 the composition is skewed to basic and acidic residues; the sequence is PRQETAEKESLQGTRRESS.

This sequence belongs to the adenoviridae shutoff protein family. Monomer. Interacts with hexon protein; this interaction allows chaperoning and trimerization of hexon proteins. Interacts (via N-terminus) with host initiation factor EIF4G (via C-terminus). Interacts (via RRM domain) with viral mRNAs that contain the tripartite leader; this interaction allows ribosome shunting and expression of viral late mRNAs. In terms of processing, might be cleaved by the viral protease. Phosphorylated. Tyrosine phosphorylation enhances preferential binding to tripartite leader mRNAs and allows ribosome shunting. Post-translationally, methylated. Asymmetric dimethylation by host PRMT1 of the Arg/Gly-rich region may regulate shutoff protein binding to hexon and promote the capsid assembly in the nucleus.

The protein resides in the host cytoplasm. Protein that inhibits host translation while promoting late viral translation by ribosome shunting. Blocks host cap-dependent translation by binding to eIF4G, displacing MKNK1 from cap initiation complexes and preventing EIF4E phosphorylation. Binds to the tripartite leader sequence of viral late mRNAs and recruits host eIF4G, PABPC1/poly-A binding protein and 40S ribosomes subunits on viral mRNAs, allowing ribosome shunting and efficient translation of late viral mRNAs even though conventional translation via ribosome scanning from the cap has been shut off in the host cell. During assembly, acts as a chaperone protein that helps hexon proteins assembly into trimers. In Snake adenovirus serotype 1 (SnAdV-1), this protein is Shutoff protein.